Here is an 882-residue protein sequence, read N- to C-terminus: DNA replication helicase (882 aa).

A disordered region spans residues 1–29 (MAAAGGERQLDGQKPGPPHLQQPGDRPAV). Residue 97–104 (GNAGSGKS) coordinates ATP.

Belongs to the herpesviridae helicase family. Associates with the primase and the primase-associated factor to form the helicase-primase complex.

It localises to the host nucleus. Component of the helicase/primase complex. Unwinds the DNA at the replication forks and generates single-stranded DNA for both leading and lagging strand synthesis. The primase synthesizes short RNA primers on the lagging strand that the polymerase elongates using dNTPs. Possesses helicase-like motifs and therefore may act as the helicase subunit of the complex. This Homo sapiens (Human) protein is DNA replication helicase.